We begin with the raw amino-acid sequence, 499 residues long: Putative DUF21 domain-containing protein At1g03270 (499 aa).

At 1-32 the chain is on the extracellular side; it reads MVVLSTLALVRAAYSLNSFVFEAEDIRFGSPW. In terms of domain architecture, CNNM transmembrane spans 29 to 211; sequence GSPWWFVVVG…GKGGELTHEE (183 aa). A helical transmembrane segment spans residues 33-53; that stretch reads WFVVVGVACFLVLFAGIMSGL. Topologically, residues 54-91 are cytoplasmic; that stretch reads TLGLMSLGLVELEILQQSGSSAEKKQAAAILPVVKKQH. A helical membrane pass occupies residues 92-112; the sequence is QLLVTLLLCNAAAMEALPICL. At 113-114 the chain is on the extracellular side; sequence DK. A helical membrane pass occupies residues 115–135; the sequence is IFHPFVAVLLSVTFVLAFGEI. Residues 136 to 145 lie on the Cytoplasmic side of the membrane; sequence IPQAICSRYG. A helical membrane pass occupies residues 146–166; the sequence is LAVGANFLWLVRILMIICYPI. Residues 167–499 lie on the Extracellular side of the membrane; that stretch reads AYPIGKVLDA…TEPLLAESDR (333 aa). Asparagine 181 carries N-linked (GlcNAc...) asparagine glycosylation. CBS domains are found at residues 230 to 291, 295 to 359, and 365 to 431; these read MTPI…EAPV, SIRK…SNLT, and HESH…IVDE. N-linked (GlcNAc...) asparagine glycans are attached at residues asparagine 357, asparagine 391, and asparagine 484.

The protein localises to the membrane. The chain is Putative DUF21 domain-containing protein At1g03270 (CBSDUF4) from Arabidopsis thaliana (Mouse-ear cress).